We begin with the raw amino-acid sequence, 163 residues long: Methyl-CpG-binding domain-containing protein 3 (163 aa).

A CW-type zinc finger spans residues 6–56; it reads TTLIDSYAAQCWKCLKVRSIESQEDYEEIRSKTLEKFFECKRCEEPGDMVM. An MBD domain is found at 65–137; the sequence is WFQDEHSIPK…EEVSFAAPKR (73 aa). The segment at 140–163 is disordered; sequence LKKKPVDSHSSSRNTEEDGVSRDA. Positions 153-163 are enriched in basic and acidic residues; it reads NTEEDGVSRDA.

It is found in the nucleus. Functionally, probable transcriptional regulator. The sequence is that of Methyl-CpG-binding domain-containing protein 3 (MBD3) from Arabidopsis thaliana (Mouse-ear cress).